A 231-amino-acid polypeptide reads, in one-letter code: Large ribosomal subunit protein uL1 (231 aa).

Belongs to the universal ribosomal protein uL1 family. As to quaternary structure, part of the 50S ribosomal subunit.

Functionally, binds directly to 23S rRNA. The L1 stalk is quite mobile in the ribosome, and is involved in E site tRNA release. Protein L1 is also a translational repressor protein, it controls the translation of the L11 operon by binding to its mRNA. The protein is Large ribosomal subunit protein uL1 of Mesomycoplasma hyopneumoniae (strain 232) (Mycoplasma hyopneumoniae).